The following is a 620-amino-acid chain: Proline--tRNA ligase (620 aa).

This sequence belongs to the class-II aminoacyl-tRNA synthetase family. ProS type 1 subfamily. As to quaternary structure, homodimer.

The protein localises to the cytoplasm. The catalysed reaction is tRNA(Pro) + L-proline + ATP = L-prolyl-tRNA(Pro) + AMP + diphosphate. Functionally, catalyzes the attachment of proline to tRNA(Pro) in a two-step reaction: proline is first activated by ATP to form Pro-AMP and then transferred to the acceptor end of tRNA(Pro). As ProRS can inadvertently accommodate and process non-cognate amino acids such as alanine and cysteine, to avoid such errors it has two additional distinct editing activities against alanine. One activity is designated as 'pretransfer' editing and involves the tRNA(Pro)-independent hydrolysis of activated Ala-AMP. The other activity is designated 'posttransfer' editing and involves deacylation of mischarged Ala-tRNA(Pro). The misacylated Cys-tRNA(Pro) is not edited by ProRS. The chain is Proline--tRNA ligase from Streptococcus suis (strain 98HAH33).